Consider the following 149-residue polypeptide: Large ribosomal subunit protein uL13 (149 aa).

The protein belongs to the universal ribosomal protein uL13 family. As to quaternary structure, part of the 50S ribosomal subunit.

In terms of biological role, this protein is one of the early assembly proteins of the 50S ribosomal subunit, although it is not seen to bind rRNA by itself. It is important during the early stages of 50S assembly. This is Large ribosomal subunit protein uL13 from Thermosipho africanus (strain TCF52B).